The chain runs to 397 residues: tRNA pseudouridine synthase D (397 aa).

Residue aspartate 76 is the Nucleophile of the active site. The TRUD domain occupies 151–361; the sequence is GVPNFFGEQR…MEGERRPLRV (211 aa).

The protein belongs to the pseudouridine synthase TruD family.

It catalyses the reaction uridine(13) in tRNA = pseudouridine(13) in tRNA. In terms of biological role, responsible for synthesis of pseudouridine from uracil-13 in transfer RNAs. The protein is tRNA pseudouridine synthase D of Geotalea daltonii (strain DSM 22248 / JCM 15807 / FRC-32) (Geobacter daltonii).